The primary structure comprises 190 residues: Protein LZIC (190 aa).

Residues 2–63 are a coiled coil; that stretch reads ASRGKTETSK…SEFNDSLKKI (62 aa).

It belongs to the CTNNBIP1 family. As to quaternary structure, does not interact with CTNNB1.

The chain is Protein LZIC (Lzic) from Rattus norvegicus (Rat).